We begin with the raw amino-acid sequence, 472 residues long: Probable serine/threonine-protein kinase At1g01540 (472 aa).

A helical membrane pass occupies residues 24 to 44 (LWVVIGILLGSLIVIALFLLS). Residues Thr67 and Thr143 each carry the phosphothreonine modification. Residues 154 to 431 (LCEENVIGEG…IHMLEAEDLL (278 aa)) form the Protein kinase domain. Residues 160–168 (IGEGGYGIV) and Lys182 each bind ATP. Residue Tyr227 is modified to Phosphotyrosine. Asp280 acts as the Proton acceptor in catalysis. Ser284 is modified (phosphoserine). A phosphothreonine mark is found at Thr314 and Thr319. Tyr327 is subject to Phosphotyrosine. Residues 437-449 (RTTRDHGSRERQE) are compositionally biased toward basic and acidic residues. The disordered stretch occupies residues 437–472 (RTTRDHGSRERQETAVVAAGSESGESGSRHHQQKQR). A compositionally biased stretch (low complexity) spans 451 to 462 (AVVAAGSESGES).

The protein belongs to the protein kinase superfamily. Ser/Thr protein kinase family.

It localises to the membrane. The catalysed reaction is L-seryl-[protein] + ATP = O-phospho-L-seryl-[protein] + ADP + H(+). The enzyme catalyses L-threonyl-[protein] + ATP = O-phospho-L-threonyl-[protein] + ADP + H(+). This Arabidopsis thaliana (Mouse-ear cress) protein is Probable serine/threonine-protein kinase At1g01540.